A 978-amino-acid chain; its full sequence is Translation initiation factor IF-2 (978 aa).

Disordered regions lie at residues 107-129 and 146-387; these read AEAPALETEQEVEAAPQVDNLEL and QEEE…HRVQ. Basic and acidic residues predominate over residues 146-169; it reads QEEELSERRRQREEQEARSREASE. The segment covering 170 to 186 has biased composition (low complexity); that stretch reads KAAAVAAEAAEAAAAQA. Positions 215–259 are enriched in basic and acidic residues; the sequence is AEKEQHLAKEKGLAREKELAESKARAAEDVVRAADLGDRRRKAES. Composition is skewed to low complexity over residues 295–326 and 349–361; these read KPAAGAVPAKPAKPGAPGAPGAPAAGAAAGAG and PTRGATAAPGAGR. Positions 375–386 are enriched in basic and acidic residues; that stretch reads GSSDRDRDDHRV. Residues 478 to 647 form the tr-type G domain; it reads PRAPVVTVMG…LLQAEVLELK (170 aa). The G1 stretch occupies residues 487-494; sequence GHVDHGKT. Residue 487 to 494 participates in GTP binding; the sequence is GHVDHGKT. Residues 512–516 are G2; it reads GITQH. Positions 533–536 are G3; that stretch reads DTPG. GTP is bound by residues 533–537 and 587–590; these read DTPGH and NKID. Residues 587 to 590 are G4; that stretch reads NKID. Residues 623-625 form a G5 region; that stretch reads SAK.

This sequence belongs to the TRAFAC class translation factor GTPase superfamily. Classic translation factor GTPase family. IF-2 subfamily.

It localises to the cytoplasm. Its function is as follows. One of the essential components for the initiation of protein synthesis. Protects formylmethionyl-tRNA from spontaneous hydrolysis and promotes its binding to the 30S ribosomal subunits. Also involved in the hydrolysis of GTP during the formation of the 70S ribosomal complex. This is Translation initiation factor IF-2 from Albidiferax ferrireducens (strain ATCC BAA-621 / DSM 15236 / T118) (Rhodoferax ferrireducens).